The chain runs to 246 residues: rRNA methyltransferase 2, mitochondrial (246 aa).

A mitochondrion-targeting transit peptide spans 1-18 (MAGYLKLVCVSFQRQGFH). S-adenosyl-L-methionine is bound by residues 83-86 (PGAW), Asp112, 129-130 (DV), and Asp154. Residue Lys194 is the Proton acceptor of the active site.

Belongs to the class I-like SAM-binding methyltransferase superfamily. RNA methyltransferase RlmE family. In terms of tissue distribution, widely expressed, with highest expression in muscle, placenta, and heart.

Its subcellular location is the mitochondrion. The catalysed reaction is uridine(1369) in 16S rRNA + S-adenosyl-L-methionine = 2'-O-methyluridine(1369) in 16S rRNA + S-adenosyl-L-homocysteine + H(+). Functionally, S-adenosyl-L-methionine-dependent 2'-O-ribose methyltransferase that catalyzes the formation of 2'-O-methyluridine at position 1369 (Um1369) in the 16S mitochondrial large subunit ribosomal RNA (mtLSU rRNA), a universally conserved modification in the peptidyl transferase domain of the mtLSU rRNA. This activity may require prior 2'-O-methylguanosine modification at position 1370 (Gm1370) by MRM3. Essential for late-stage assembly of mtLSU required for efficient translation of mitochondrial DNA encoded proteins; methyltransferase activity is not required for this function. Essential for mitochondrial respiratory function. This Homo sapiens (Human) protein is rRNA methyltransferase 2, mitochondrial.